Reading from the N-terminus, the 273-residue chain is 4-hydroxy-tetrahydrodipicolinate reductase (273 aa).

NAD(+) contacts are provided by residues 12 to 17 (GAGGRM) and Glu38. Arg39 is an NADP(+) binding site. Residues 102–104 (GTT) and 126–129 (AANF) each bind NAD(+). His159 serves as the catalytic Proton donor/acceptor. His160 provides a ligand contact to (S)-2,3,4,5-tetrahydrodipicolinate. The Proton donor role is filled by Lys163. 169 to 170 (GT) contacts (S)-2,3,4,5-tetrahydrodipicolinate.

It belongs to the DapB family. As to quaternary structure, homotetramer.

The protein localises to the cytoplasm. It catalyses the reaction (S)-2,3,4,5-tetrahydrodipicolinate + NAD(+) + H2O = (2S,4S)-4-hydroxy-2,3,4,5-tetrahydrodipicolinate + NADH + H(+). The catalysed reaction is (S)-2,3,4,5-tetrahydrodipicolinate + NADP(+) + H2O = (2S,4S)-4-hydroxy-2,3,4,5-tetrahydrodipicolinate + NADPH + H(+). It functions in the pathway amino-acid biosynthesis; L-lysine biosynthesis via DAP pathway; (S)-tetrahydrodipicolinate from L-aspartate: step 4/4. Functionally, catalyzes the conversion of 4-hydroxy-tetrahydrodipicolinate (HTPA) to tetrahydrodipicolinate. The chain is 4-hydroxy-tetrahydrodipicolinate reductase from Shigella flexneri.